The sequence spans 894 residues: MATSMAAASGRFESAKSIEERKEQTRNARAEVLRQAKANFEKEERRKELKRLRGEDTWMLPDVNERIEQFSQEHSVKKKKKKDKHSKKAKKEKKKKSKKQKYEKNNESSDSSSSSEDEWVEAVPSQTPDKEKAWKVKDEKSGKDDTQIIKRDEWMTVDFMSVKTVSSSSLKAEKETMRKIEQEKNQALEQSKLMERELNPYWKDGGTGLPPEDCSVSSITKVSVVEDGGLSWLRKSYLRMKEQAEKQSRNFEDIVAERYGSMEIFQSKLEDAEKAASTKEDYRRERWRKPTYSDKAQNCQESRESDLVKYGNSSRDRYATTDTAKNSNNEKFIGDEKDKRPGSLETCRRESNPRQNQEFSFGNLRAKFLRPSDDEELSFHSKGRKFEPLSSSSALVAQGSLCSGFRKPTKNSEERLTSWSRSDGRGDKKHSNQKPSETSTDEHQHVPEDPREKSQDEVLRDDPPKKEHLRDTKSTFAGSPERESIHILSVDEKNKLGAKIIKAEMMGNMELAEQLKVQLEKANKFKETITQIPKKSGVENEDQQEVILVRTDQSGRVWPVNTPGKSLESQGGRRKRQMVSTHEERERVRYFHDDDNLSLNDLVKNEKMGTAENQNKLFMRMASKFMGKTDGDYYTLDDMFVSKAAERERLGEEEENQRKKAIAEHRSLAAQMEKCLYCFDSSQFPKHLIVAIGVKVYLCLPNVRSLTEGHCLIVPLQHHRAATLLDEDIWEEIQMFRKSLVKMFEDKGLDCIFLETNMSMKKQYHMVYECIPLPKEVGDMAPIYFKKAIMESDEEWSMNKKLIDLSSKDIRKSVPRGLPYFSVDFGLHGGFAHVIEDQHKFPHYFGKEIIGGMLDIEPRLWRKGIRESFEDQRKKALQFAQWWKPYDFTKSKNY.

The segment at 1–147 is disordered; it reads MATSMAAASG…DEKSGKDDTQ (147 aa). The span at 13-56 shows a compositional bias: basic and acidic residues; that stretch reads ESAKSIEERKEQTRNARAEVLRQAKANFEKEERRKELKRLRGED. Positions 13-107 form a coiled coil; it reads ESAKSIEERK…KKQKYEKNNE (95 aa). At Ser75 the chain carries Phosphoserine. Basic residues predominate over residues 76–99; the sequence is VKKKKKKDKHSKKAKKEKKKKSKK. Over residues 128-147 the composition is skewed to basic and acidic residues; sequence PDKEKAWKVKDEKSGKDDTQ. A coiled-coil region spans residues 166–281; the sequence is SSSSLKAEKE…AEKAASTKED (116 aa). A Glycyl lysine isopeptide (Lys-Gly) (interchain with G-Cter in SUMO2) cross-link involves residue Lys171. A compositionally biased stretch (basic and acidic residues) spans 270-284; it reads EDAEKAASTKEDYRR. Residues 270–483 are disordered; sequence EDAEKAASTK…STFAGSPERE (214 aa). The span at 320-330 shows a compositional bias: polar residues; it reads TTDTAKNSNNE. Residues 332–352 show a composition bias toward basic and acidic residues; it reads FIGDEKDKRPGSLETCRRESN. Ser360 and Ser372 each carry phosphoserine. Basic and acidic residues-rich tracts occupy residues 410-430 and 440-473; these read KNSEERLTSWSRSDGRGDKKH and TDEHQHVPEDPREKSQDEVLRDDPPKKEHLRDTK. 2 positions are modified to phosphoserine: Ser479 and Ser484. The stretch at 502 to 530 forms a coiled coil; that stretch reads KAEMMGNMELAEQLKVQLEKANKFKETIT. The disordered stretch occupies residues 561–583; it reads NTPGKSLESQGGRRKRQMVSTHE. Residue Lys604 forms a Glycyl lysine isopeptide (Lys-Gly) (interchain with G-Cter in SUMO2) linkage. A coiled-coil region spans residues 644–675; the sequence is AAERERLGEEEENQRKKAIAEHRSLAAQMEKC.

It belongs to the CWF19 family.

In Homo sapiens (Human), this protein is CWF19-like protein 2 (CWF19L2).